Consider the following 427-residue polypeptide: Flotillin-1 (427 aa).

S19, S163, and S385 each carry phosphoserine. Position 387 is a phosphothreonine (T387).

The protein belongs to the band 7/mec-2 family. Flotillin subfamily. Heterooligomeric complex of flotillin-1 and flotillin-2 and caveolin-1 and caveolin-2. Interacts with ECPAS.

It is found in the cell membrane. The protein localises to the endosome. Its subcellular location is the membrane. It localises to the caveola. The protein resides in the melanosome. It is found in the membrane raft. Its function is as follows. May act as a scaffolding protein within caveolar membranes, functionally participating in formation of caveolae or caveolae-like vesicles. The sequence is that of Flotillin-1 (FLOT1) from Sus scrofa (Pig).